The chain runs to 453 residues: Tol-Pal system protein TolB (453 aa).

An N-terminal signal peptide occupies residues 1-39; it reads MSFIPNTEAEALSALFSRRSVLGATAAGGLLATPLAAFA.

It belongs to the TolB family. In terms of assembly, the Tol-Pal system is composed of five core proteins: the inner membrane proteins TolA, TolQ and TolR, the periplasmic protein TolB and the outer membrane protein Pal. They form a network linking the inner and outer membranes and the peptidoglycan layer.

The protein localises to the periplasm. In terms of biological role, part of the Tol-Pal system, which plays a role in outer membrane invagination during cell division and is important for maintaining outer membrane integrity. The protein is Tol-Pal system protein TolB of Gluconobacter oxydans (strain 621H) (Gluconobacter suboxydans).